Consider the following 376-residue polypeptide: Protein FAM199X (376 aa).

Basic and acidic residues predominate over residues 237-253 (YIKEHSPRQRSTRESWK). The interval 237 to 350 (YIKEHSPRQR…QRQARKERLS (114 aa)) is disordered. The segment covering 255–300 (TSYSTASTSGVSGASVSSSSASMVSTASSTGSSGGNSASNSSANMS) has biased composition (low complexity). Basic residues predominate over residues 318 to 337 (DSKKRSKQRKLQQKALRKRQ). Positions 320-349 (KKRSKQRKLQQKALRKRQLKEQRQARKERL) form a coiled coil. Positions 338–349 (LKEQRQARKERL) are enriched in basic and acidic residues.

The protein belongs to the FAM199 family.

The sequence is that of Protein FAM199X (fam199x) from Xenopus tropicalis (Western clawed frog).